We begin with the raw amino-acid sequence, 197 residues long: Small ribosomal subunit protein uS4c (197 aa).

The S4 RNA-binding domain maps to 84-143; the sequence is MRLDNIIFQLGMASTIPAARQLVCHRHILVNHRVVDIPSYRCKPRDIISIRNRPTSANAL.

Belongs to the universal ribosomal protein uS4 family. As to quaternary structure, part of the 30S ribosomal subunit. Contacts protein S5. The interaction surface between S4 and S5 is involved in control of translational fidelity.

The protein resides in the plastid. It localises to the chloroplast. One of the primary rRNA binding proteins, it binds directly to 16S rRNA where it nucleates assembly of the body of the 30S subunit. Functionally, with S5 and S12 plays an important role in translational accuracy. In Adiantum capillus-veneris (Maidenhair fern), this protein is Small ribosomal subunit protein uS4c (rps4).